Here is a 338-residue protein sequence, read N- to C-terminus: MNFRRRLCTAALIAALPLASQAQNNTLLLNSVLAPQNPMTKMIVKPWAEKIAQVTEGRVKVDVAPSSLAAPQQQLASVNKGVFDIAYQFHGLLTDQVKLNQIAQLPFVNTTARGSSVALWRTYQKHFAKANELGEVQVLALFVQPPGVMFGMKGPIDGMDKLKGRKVYALPGVPSAMMESAGAAVVAAPGARSYEIVSGKTVDAFVGYPTSDAEGLKTLSYATDVTDIPGNLTAVSWVLFMNKKRWAALSEKDRKAIESISGEAFAQGMKQYDDLETKVRSEAAAKGIKFHMANDAFVKELQTLATPITQAWLKDASSRGVNGQEALDFYRAQAAANR.

Residues 1–22 (MNFRRRLCTAALIAALPLASQA) form the signal peptide.

Part of a two-component transport system composed of TsaT and TsaS.

The protein localises to the cell outer membrane. Involved in the uptake of p-toluenesulphonate (TSA). Forms a large, general diffusion pore with a preference for anions. This chain is Outer membrane transporter protein TsaT (tsaT), found in Comamonas testosteroni (Pseudomonas testosteroni).